A 256-amino-acid chain; its full sequence is DNA repair protein RecO (256 aa).

This sequence belongs to the RecO family.

Functionally, involved in DNA repair and RecF pathway recombination. In Streptococcus pneumoniae serotype 2 (strain D39 / NCTC 7466), this protein is DNA repair protein RecO.